The sequence spans 275 residues: Voltage-dependent calcium channel gamma-7 subunit (275 aa).

4 helical membrane-spanning segments follow: residues 8 to 28 (ALTL…GIAV), 103 to 123 (FPMV…IGHI), 129 to 149 (ILAF…VVGL), and 179 to 199 (FAFA…SVYL). Phosphoserine occurs at positions 222, 225, and 273.

This sequence belongs to the PMP-22/EMP/MP20 family. CACNG subfamily. As to quaternary structure, interacts with CACNA1C. Identified in a complex with the L-type calcium channel subunits CACNA1C, CACNA2D1 and either CACNB1 or CACNB2. Acts as an auxiliary subunit for AMPA-selective glutamate receptors (AMPARs), such as GRIA1 and GRIA2. As to expression, detected in heart left ventricle. Widely expressed.

It is found in the cell membrane. Regulates the activity of L-type calcium channels that contain CACNA1C as pore-forming subunit. Regulates the trafficking and gating properties of AMPA-selective glutamate receptors (AMPARs). Promotes their targeting to the cell membrane and synapses and modulates their gating properties by slowing their rates of activation, deactivation and desensitization and by mediating their resensitization. Displays subunit-specific AMPA receptor regulation. Shows specificity only for GRIA1 and GRIA2. The protein is Voltage-dependent calcium channel gamma-7 subunit (CACNG7) of Homo sapiens (Human).